The sequence spans 166 residues: NADH-quinone oxidoreductase subunit E (166 aa).

Residues cysteine 92, cysteine 97, cysteine 133, and cysteine 137 each contribute to the [2Fe-2S] cluster site.

It belongs to the complex I 24 kDa subunit family. Composed of 13 different subunits. Subunits NuoCD, E, F, and G constitute the peripheral sector of the complex. [2Fe-2S] cluster serves as cofactor.

The catalysed reaction is a quinone + NADH + 5 H(+)(in) = a quinol + NAD(+) + 4 H(+)(out). NDH-1 shuttles electrons from NADH, via FMN and iron-sulfur (Fe-S) centers, to quinones in the respiratory chain. The immediate electron acceptor for the enzyme in this species is believed to be ubiquinone. Couples the redox reaction to proton translocation (for every two electrons transferred, four hydrogen ions are translocated across the cytoplasmic membrane), and thus conserves the redox energy in a proton gradient. The polypeptide is NADH-quinone oxidoreductase subunit E (nuoE) (Shigella flexneri).